We begin with the raw amino-acid sequence, 219 residues long: Leukocyte surface antigen CD53 (219 aa).

Residues 1–11 (MGMSSLKLLKY) are Cytoplasmic-facing. A helical transmembrane segment spans residues 12 to 32 (VLFIFNLLFWVCGCCILGFGI). The Extracellular segment spans residues 33-54 (YFLVQNTYGVLFRNLPFLTLGN). A helical membrane pass occupies residues 55 to 69 (ILVIVGSIIMVVAFL). The Cytoplasmic portion of the chain corresponds to 70–80 (GCMGSIKENKC). Residues 81 to 106 (LLMSFFVLLLIILLAEVTIAILLFVY) form a helical membrane-spanning segment. Residues 107-181 (EQKLNTLVAE…NKAKSWFHSN (75 aa)) are Extracellular-facing. Asparagine 119, asparagine 129, and asparagine 148 each carry an N-linked (GlcNAc...) asparagine glycan. The helical transmembrane segment at 182 to 206 (FLYIGIITICVCVIQVLGMSFALTL) threads the bilayer. The Cytoplasmic segment spans residues 207–219 (NCQIDKTSQALGL).

Belongs to the tetraspanin (TM4SF) family. In terms of assembly, interacts with SCIMP. Interacts with CD45/PTPRC. Interacts with IL7R. Interacts with RBL2 and PPP2CA.

It localises to the cell membrane. The protein resides in the cell junction. The protein localises to the membrane. In terms of biological role, structural component of specialized membrane microdomains known as tetraspanin-enriched microdomains (TERMs), which act as platforms for receptor clustering and signaling. Participates thereby in diverse biological functions such as cell signal transduction, adhesion, migration and protein trafficking. Plays a role in the activation of monocytes and B-cells. Acts as an essential regulator of B-cell development by promoting interleukin-7 receptor/IL7R signaling. Also promotes, in B-cells, the BCR signaling by recruiting PKC to the plasma membrane in order to phosphorylate its substrates. Plays an essential role in lymphocyte homing to lymph nodes by stabilizing L-selectin/SELL cell surface expression. Also mediates metabolic and inflammatory functions in hepatocytes and adipose tissue by promoting TNF-alpha and LPS signaling independent of the immune compartment. Protects hematopoietic stem cell function in response to stress by facilitating DREAM complex activity through association with p130/RBL2 and its phosphatase PP2A. This chain is Leukocyte surface antigen CD53 (Cd53), found in Mus musculus (Mouse).